Consider the following 1236-residue polypeptide: DNA-directed RNA polymerase subunit beta (1236 aa).

Residues 1193–1212 (PDVLDDDSYDQNNDEDIDEI) form a disordered region. Residues 1194–1212 (DVLDDDSYDQNNDEDIDEI) show a composition bias toward acidic residues.

It belongs to the RNA polymerase beta chain family. As to quaternary structure, the RNAP catalytic core consists of 2 alpha, 1 beta, 1 beta' and 1 omega subunit. When a sigma factor is associated with the core the holoenzyme is formed, which can initiate transcription.

It carries out the reaction RNA(n) + a ribonucleoside 5'-triphosphate = RNA(n+1) + diphosphate. Its function is as follows. DNA-dependent RNA polymerase catalyzes the transcription of DNA into RNA using the four ribonucleoside triphosphates as substrates. In Clostridium beijerinckii (strain ATCC 51743 / NCIMB 8052) (Clostridium acetobutylicum), this protein is DNA-directed RNA polymerase subunit beta.